The chain runs to 102 residues: UPF0751 protein DSY4013 (102 aa).

The protein belongs to the UPF0751 family.

This Desulfitobacterium hafniense (strain Y51) protein is UPF0751 protein DSY4013.